Consider the following 144-residue polypeptide: MGMMSEFKTFAMRGNVIDLAVGVIIGAAFGKIVDSVVNDLIMPVIGRIVGKLDFSNMFVMLADPPPGTPQTLDALKKAGVPVFAYGNFLTIVVNFVILAFIIFMMVRAFNKMREKEAEPAAPAVTPEDIVLLREIRDSLKAPRS.

Transmembrane regions (helical) follow at residues 16-36 (VIDLAVGVIIGAAFGKIVDSV) and 86-106 (GNFLTIVVNFVILAFIIFMMV).

It belongs to the MscL family. Homopentamer.

The protein resides in the cell inner membrane. Channel that opens in response to stretch forces in the membrane lipid bilayer. May participate in the regulation of osmotic pressure changes within the cell. The sequence is that of Large-conductance mechanosensitive channel from Cupriavidus metallidurans (strain ATCC 43123 / DSM 2839 / NBRC 102507 / CH34) (Ralstonia metallidurans).